A 161-amino-acid polypeptide reads, in one-letter code: Allophycocyanin alpha chain (161 aa).

N71 bears the N4-methylasparagine mark. C81 is a binding site for (2R,3E)-phycocyanobilin.

It belongs to the phycobiliprotein family. In terms of assembly, heterodimer of an alpha and a beta chain. In terms of processing, contains one covalently linked phycocyanobilin chromophore.

It is found in the plastid. The protein localises to the chloroplast thylakoid membrane. Its function is as follows. Light-harvesting photosynthetic bile pigment-protein from the phycobiliprotein complex. Allophycocyanin has a maximum absorption at approximately 650 nanometers. This is Allophycocyanin alpha chain (apcA) from Galdieria sulphuraria (Red alga).